Here is a 361-residue protein sequence, read N- to C-terminus: tRNA-specific 2-thiouridylase MnmA (361 aa).

ATP is bound by residues 9 to 16 (GMSGGVDS) and Met35. Positions 95–97 (NPD) are interaction with target base in tRNA. Cys100 acts as the Nucleophile in catalysis. Cysteines 100 and 196 form a disulfide. Gly124 serves as a coordination point for ATP. The segment at 146–148 (KDQ) is interaction with tRNA. The active-site Cysteine persulfide intermediate is the Cys196. The tract at residues 308–309 (RY) is interaction with tRNA.

This sequence belongs to the MnmA/TRMU family.

Its subcellular location is the cytoplasm. It carries out the reaction S-sulfanyl-L-cysteinyl-[protein] + uridine(34) in tRNA + AH2 + ATP = 2-thiouridine(34) in tRNA + L-cysteinyl-[protein] + A + AMP + diphosphate + H(+). In terms of biological role, catalyzes the 2-thiolation of uridine at the wobble position (U34) of tRNA, leading to the formation of s(2)U34. In Nitrosomonas eutropha (strain DSM 101675 / C91 / Nm57), this protein is tRNA-specific 2-thiouridylase MnmA.